Reading from the N-terminus, the 726-residue chain is Probable dipeptidyl-peptidase 5 (726 aa).

An N-terminal signal peptide occupies residues 1 to 19; that stretch reads MGALQWLSITAAAASAVSA. Residues Asn97, Asn153, Asn259, Asn398, Asn453, and Asn529 are each glycosylated (N-linked (GlcNAc...) asparagine). The active-site Charge relay system is the Ser564. N-linked (GlcNAc...) asparagine glycosylation is present at Asn611. Active-site charge relay system residues include Asp647 and His679.

The protein belongs to the peptidase S9C family.

It is found in the secreted. Extracellular dipeptidyl-peptidase which removes N-terminal dipeptides sequentially from polypeptides having unsubstituted N-termini. The polypeptide is Probable dipeptidyl-peptidase 5 (dpp5) (Aspergillus niger).